A 119-amino-acid chain; its full sequence is Methylglyoxal synthase (119 aa).

Residues 1–119 (MKIALIAHDK…KTAELIIKQF (119 aa)) form the MGS-like domain. Residues H8, K12, 34–37 (TGTT), and 54–55 (SG) contribute to the substrate site. The active-site Proton donor/acceptor is D60. H87 contacts substrate.

The protein belongs to the methylglyoxal synthase family.

It carries out the reaction dihydroxyacetone phosphate = methylglyoxal + phosphate. Catalyzes the formation of methylglyoxal from dihydroxyacetone phosphate. In Clostridium beijerinckii (strain ATCC 51743 / NCIMB 8052) (Clostridium acetobutylicum), this protein is Methylglyoxal synthase.